Here is a 215-residue protein sequence, read N- to C-terminus: Adenylate kinase (215 aa).

Residue 10 to 15 (GAGKGT) participates in ATP binding. The interval 30–59 (STGDILRANVREGTELGLAAKAYMDKGELV) is NMP. AMP-binding positions include Thr31, Arg36, 57-59 (ELV), 85-88 (GYPR), and Gln92. Positions 126-162 (GRLMCKCGASYHTIANPPKKDNICDICGGEVYQRDDD) are LID. Arg127 lines the ATP pocket. Cys130 and Cys132 together coordinate Zn(2+). Residue 135–136 (SY) participates in ATP binding. Positions 149 and 152 each coordinate Zn(2+). Positions 159 and 170 each coordinate AMP. Residue Lys198 coordinates ATP.

This sequence belongs to the adenylate kinase family. Monomer.

It localises to the cytoplasm. The enzyme catalyses AMP + ATP = 2 ADP. The protein operates within purine metabolism; AMP biosynthesis via salvage pathway; AMP from ADP: step 1/1. Functionally, catalyzes the reversible transfer of the terminal phosphate group between ATP and AMP. Plays an important role in cellular energy homeostasis and in adenine nucleotide metabolism. The sequence is that of Adenylate kinase from Methanosarcina mazei (strain ATCC BAA-159 / DSM 3647 / Goe1 / Go1 / JCM 11833 / OCM 88) (Methanosarcina frisia).